Consider the following 250-residue polypeptide: Ribonuclease PH (250 aa).

Phosphate is bound by residues arginine 87 and 125-127 (GTR).

The protein belongs to the RNase PH family. Homohexameric ring arranged as a trimer of dimers.

The enzyme catalyses tRNA(n+1) + phosphate = tRNA(n) + a ribonucleoside 5'-diphosphate. In terms of biological role, phosphorolytic 3'-5' exoribonuclease that plays an important role in tRNA 3'-end maturation. Removes nucleotide residues following the 3'-CCA terminus of tRNAs; can also add nucleotides to the ends of RNA molecules by using nucleoside diphosphates as substrates, but this may not be physiologically important. Probably plays a role in initiation of 16S rRNA degradation (leading to ribosome degradation) during starvation. This Moorella thermoacetica (strain ATCC 39073 / JCM 9320) protein is Ribonuclease PH.